A 70-amino-acid polypeptide reads, in one-letter code: U-scoloptoxin(20)-Sm1a (70 aa).

Positions 1 to 24 (MKKRSQVFCIFIAMVLLILPLSMS) are cleaved as a signal peptide.

It belongs to the scoloptoxin-20 family. In terms of processing, contains 3 disulfide bonds. As to expression, expressed by the venom gland.

It is found in the secreted. This Scolopendra morsitans (Tanzanian blue ringleg centipede) protein is U-scoloptoxin(20)-Sm1a.